The following is a 601-amino-acid chain: DNA ligase 2 (601 aa).

An ATP-binding site is contributed by Glu263. Lys265 functions as the N6-AMP-lysine intermediate in the catalytic mechanism. ATP contacts are provided by Arg270, Arg285, Glu314, Phe354, Arg432, and Lys438.

It belongs to the ATP-dependent DNA ligase family. It depends on Mg(2+) as a cofactor.

It catalyses the reaction ATP + (deoxyribonucleotide)n-3'-hydroxyl + 5'-phospho-(deoxyribonucleotide)m = (deoxyribonucleotide)n+m + AMP + diphosphate.. Its function is as follows. DNA ligase that seals nicks in double-stranded DNA during DNA replication, DNA recombination and DNA repair. The chain is DNA ligase 2 from Thermofilum pendens (strain DSM 2475 / Hrk 5).